The following is a 338-amino-acid chain: MKVFYDKDCDLSLIKGKTVAIIGYGSQGHAHAQNLNESGVKVVVGLRKGGASWDKVAKAGLTVAEVDDAVKSADLVMILLPDENIPEVYNNNVAPNIKQGATLAFAHGFNIHYNQVVPRADLDVIMVAPKGPGHTVRSEYLKGGGVPSLIAVYQDKSGKARDLALSYAMANGGGKGGIIETNFKEETETDLFGEQAVLCGGAVELVKMGFETLTEAGYAPEMAYFECLHELKLIVDLMYEGGIANMNYSISNNAEYGEYVTGTEVINDKSREAMRAALKRIQTGEYAKMFIQEGRTNYPSMTARRRMNADHAIEKVGGQLRAMMPWISKNKLVDQSRN.

Residues 1 to 181 (MKVFYDKDCD…GGGKGGIIET (181 aa)) form the KARI N-terminal Rossmann domain. NADP(+) contacts are provided by residues 24–27 (YGSQ), R47, and S52. Residue H107 is part of the active site. G133 serves as a coordination point for NADP(+). Positions 182 to 327 (NFKEETETDL…GQLRAMMPWI (146 aa)) constitute a KARI C-terminal knotted domain. 4 residues coordinate Mg(2+): D190, E194, E226, and E230. Residue S251 coordinates substrate.

It belongs to the ketol-acid reductoisomerase family. Requires Mg(2+) as cofactor.

The enzyme catalyses (2R)-2,3-dihydroxy-3-methylbutanoate + NADP(+) = (2S)-2-acetolactate + NADPH + H(+). It carries out the reaction (2R,3R)-2,3-dihydroxy-3-methylpentanoate + NADP(+) = (S)-2-ethyl-2-hydroxy-3-oxobutanoate + NADPH + H(+). The protein operates within amino-acid biosynthesis; L-isoleucine biosynthesis; L-isoleucine from 2-oxobutanoate: step 2/4. It participates in amino-acid biosynthesis; L-valine biosynthesis; L-valine from pyruvate: step 2/4. In terms of biological role, involved in the biosynthesis of branched-chain amino acids (BCAA). Catalyzes an alkyl-migration followed by a ketol-acid reduction of (S)-2-acetolactate (S2AL) to yield (R)-2,3-dihydroxy-isovalerate. In the isomerase reaction, S2AL is rearranged via a Mg-dependent methyl migration to produce 3-hydroxy-3-methyl-2-ketobutyrate (HMKB). In the reductase reaction, this 2-ketoacid undergoes a metal-dependent reduction by NADPH to yield (R)-2,3-dihydroxy-isovalerate. The chain is Ketol-acid reductoisomerase (NADP(+)) from Delftia acidovorans (strain DSM 14801 / SPH-1).